A 538-amino-acid chain; its full sequence is Putative cysteine ligase BshC (538 aa).

Residues 460-485 (KINEQIELLERMLKRNIEKKHEVELN) are a coiled coil.

This sequence belongs to the BshC family.

In terms of biological role, involved in bacillithiol (BSH) biosynthesis. May catalyze the last step of the pathway, the addition of cysteine to glucosamine malate (GlcN-Mal) to generate BSH. This is Putative cysteine ligase BshC from Bacillus cereus (strain Q1).